Here is a 587-residue protein sequence, read N- to C-terminus: Aspartate--tRNA ligase (587 aa).

Glutamate 174 is a binding site for L-aspartate. The aspartate stretch occupies residues 198–201 (QTFK). Residue arginine 220 participates in L-aspartate binding. ATP contacts are provided by residues 220–222 (RDE) and glutamine 229. L-aspartate is bound at residue histidine 447. Glutamate 481 contributes to the ATP binding site. Residue arginine 488 participates in L-aspartate binding. 533–536 (GLDR) is a binding site for ATP.

The protein belongs to the class-II aminoacyl-tRNA synthetase family. Type 1 subfamily. In terms of assembly, homodimer.

The protein localises to the cytoplasm. It carries out the reaction tRNA(Asp) + L-aspartate + ATP = L-aspartyl-tRNA(Asp) + AMP + diphosphate. In terms of biological role, catalyzes the attachment of L-aspartate to tRNA(Asp) in a two-step reaction: L-aspartate is first activated by ATP to form Asp-AMP and then transferred to the acceptor end of tRNA(Asp). This chain is Aspartate--tRNA ligase, found in Porphyromonas gingivalis (strain ATCC BAA-308 / W83).